The chain runs to 238 residues: Ribonuclease PH (238 aa).

Phosphate contacts are provided by residues Arg86 and 124 to 126 (GTR).

The protein belongs to the RNase PH family. In terms of assembly, homohexameric ring arranged as a trimer of dimers.

It carries out the reaction tRNA(n+1) + phosphate = tRNA(n) + a ribonucleoside 5'-diphosphate. Phosphorolytic 3'-5' exoribonuclease that plays an important role in tRNA 3'-end maturation. Removes nucleotide residues following the 3'-CCA terminus of tRNAs; can also add nucleotides to the ends of RNA molecules by using nucleoside diphosphates as substrates, but this may not be physiologically important. Probably plays a role in initiation of 16S rRNA degradation (leading to ribosome degradation) during starvation. The polypeptide is Ribonuclease PH (Maricaulis maris (strain MCS10) (Caulobacter maris)).